A 489-amino-acid polypeptide reads, in one-letter code: Glutamate--tRNA ligase (489 aa).

Residues 11 to 21 carry the 'HIGH' region motif; that stretch reads PSPTGHLHIGN. Positions 252 to 256 match the 'KMSKS' region motif; the sequence is KLSKR. Residue lysine 255 coordinates ATP.

This sequence belongs to the class-I aminoacyl-tRNA synthetase family. Glutamate--tRNA ligase type 1 subfamily. Monomer.

The protein resides in the cytoplasm. It catalyses the reaction tRNA(Glu) + L-glutamate + ATP = L-glutamyl-tRNA(Glu) + AMP + diphosphate. Catalyzes the attachment of glutamate to tRNA(Glu) in a two-step reaction: glutamate is first activated by ATP to form Glu-AMP and then transferred to the acceptor end of tRNA(Glu). The protein is Glutamate--tRNA ligase of Oceanobacillus iheyensis (strain DSM 14371 / CIP 107618 / JCM 11309 / KCTC 3954 / HTE831).